The following is a 131-amino-acid chain: Small ribosomal subunit protein uS11 (131 aa).

It belongs to the universal ribosomal protein uS11 family. In terms of assembly, part of the 30S ribosomal subunit. Interacts with proteins S7 and S18. Binds to IF-3.

Functionally, located on the platform of the 30S subunit, it bridges several disparate RNA helices of the 16S rRNA. Forms part of the Shine-Dalgarno cleft in the 70S ribosome. This is Small ribosomal subunit protein uS11 from Helicobacter pylori (strain ATCC 700392 / 26695) (Campylobacter pylori).